Consider the following 345-residue polypeptide: Selenide, water dikinase (345 aa).

The active site involves cysteine 15. ATP-binding positions include lysine 18 and 46–48; that span reads SKD. Aspartate 49 serves as a coordination point for Mg(2+). ATP-binding positions include aspartate 66, aspartate 89, and 137–139; that span reads GHS. Aspartate 89 serves as a coordination point for Mg(2+). Mg(2+) is bound at residue aspartate 225.

This sequence belongs to the selenophosphate synthase 1 family. Class I subfamily. As to quaternary structure, homodimer. Requires Mg(2+) as cofactor.

It carries out the reaction hydrogenselenide + ATP + H2O = selenophosphate + AMP + phosphate + 2 H(+). Its function is as follows. Synthesizes selenophosphate from selenide and ATP. The chain is Selenide, water dikinase from Aeromonas hydrophila subsp. hydrophila (strain ATCC 7966 / DSM 30187 / BCRC 13018 / CCUG 14551 / JCM 1027 / KCTC 2358 / NCIMB 9240 / NCTC 8049).